Here is a 488-residue protein sequence, read N- to C-terminus: ATP synthase subunit beta (488 aa).

Gly164–Thr171 is an ATP binding site.

Belongs to the ATPase alpha/beta chains family. F-type ATPases have 2 components, CF(1) - the catalytic core - and CF(0) - the membrane proton channel. CF(1) has five subunits: alpha(3), beta(3), gamma(1), delta(1), epsilon(1). CF(0) has four main subunits: a(1), b(1), b'(1) and c(9-12).

The protein localises to the cellular thylakoid membrane. The enzyme catalyses ATP + H2O + 4 H(+)(in) = ADP + phosphate + 5 H(+)(out). In terms of biological role, produces ATP from ADP in the presence of a proton gradient across the membrane. The catalytic sites are hosted primarily by the beta subunits. This is ATP synthase subunit beta from Prochlorococcus marinus (strain MIT 9313).